The sequence spans 300 residues: MNDALADSGLVIVDKPQGMTSHDVVSKIRRTFSTKKVGHAGTLDPMATGVLVLGLERGTKFLAHMVASTKSYTATIRLGAATTTDDREGETITSASPDQLAGITETKISDAVKQFRGSIMQRPAAVSAIKIDGKRAHQRVREGEKVEIPARPVTISRYDILEIRRDAAFIDIDVEVDCSSGTYIRSLARDLGEELGVGGHLTALRRTQVGPFTLDNAVTLEKLEENPHVSLTLDQALAASYPVLSVSEKEASDLAMGKWLTPRGLKGIHAAVDPHGRAIALVKEQGKRLATIFVARPSTL.

The active-site Nucleophile is aspartate 44.

The protein belongs to the pseudouridine synthase TruB family. Type 1 subfamily.

It catalyses the reaction uridine(55) in tRNA = pseudouridine(55) in tRNA. Its function is as follows. Responsible for synthesis of pseudouridine from uracil-55 in the psi GC loop of transfer RNAs. This is tRNA pseudouridine synthase B from Corynebacterium diphtheriae (strain ATCC 700971 / NCTC 13129 / Biotype gravis).